The following is a 301-amino-acid chain: Mitochondrial ornithine transporter 1 (301 aa).

A run of 6 helical transmembrane segments spans residues 5–25 (PAIQ…ACVL), 68–88 (SPAL…YGFC), 110–130 (AAAG…TELV), 168–188 (GFYH…FFFF), 207–227 (LGPI…WLAV), and 237–257 (IQVL…LSIV). Solcar repeat units lie at residues 7-91 (IQAA…CQQV), 104-197 (LSDL…SRSF), and 207-293 (LGPI…SRKL).

This sequence belongs to the mitochondrial carrier (TC 2.A.29) family. Expressed in the liver (at protein level).

Its subcellular location is the mitochondrion inner membrane. It is found in the mitochondrion membrane. It carries out the reaction L-citrulline(in) + L-ornithine(out) + H(+)(in) = L-citrulline(out) + L-ornithine(in) + H(+)(out). The enzyme catalyses L-ornithine(in) + L-arginine(out) = L-ornithine(out) + L-arginine(in). The catalysed reaction is L-ornithine(out) + L-lysine(in) = L-ornithine(in) + L-lysine(out). It catalyses the reaction L-ornithine(out) + H(+)(in) = L-ornithine(in) + H(+)(out). It carries out the reaction L-lysine(out) + H(+)(in) = L-lysine(in) + H(+)(out). Inhibited by pyridoxal 5'-phosphate as well as by mercurials (mersalyl, p-chloromercuribenzene sulfonate, and mercuric chloride), N-ethylmaleimide and spermine. Functionally, mitochondrial ornithine-citrulline antiporter. Catalyzes the exchange between cytosolic ornithine and mitochondrial citrulline plus an H(+), the proton compensates the positive charge of ornithine thus leading to an electroneutral transport. Plays a crucial role in the urea cycle, by connecting the cytosolic and the intramitochondrial reactions of the urea cycle. Lysine and arginine are also transported by the antiport mechanism. In addition, catalyzes an electroneutral exchange of ornithine or lysine for H(+), a reaction driven by the pH gradient across the inner membrane. The sequence is that of Mitochondrial ornithine transporter 1 (Slc25a15) from Rattus norvegicus (Rat).